The primary structure comprises 438 residues: High-affinity gluconate transporter (438 aa).

13 helical membrane-spanning segments follow: residues 2 to 22 (PLVI…RFKM), 23 to 43 (NGFI…GMPL), 52 to 72 (AGVG…AMLG), 108 to 128 (VGFA…VFTI), 134 to 154 (IPLL…HGFL), 174 to 194 (TLLY…PVYA), 222 to 242 (FGVS…RAIA), 258 to 278 (FLGD…FTFG), 292 to 312 (LVSS…GGAF), 327 to 347 (SMMH…AAVL), 349 to 369 (IALG…APLI), 370 to 390 (ATTG…SVIF), and 418 to 438 (MLET…NMVI).

This sequence belongs to the GntP permease family.

The protein resides in the cell inner membrane. The protein operates within carbohydrate acid metabolism; D-gluconate degradation. Part of the gluconate utilization system Gnt-I; high-affinity intake of gluconate. The polypeptide is High-affinity gluconate transporter (gntT) (Escherichia coli (strain K12)).